A 390-amino-acid polypeptide reads, in one-letter code: LL-diaminopimelate aminotransferase 2 (390 aa).

Positions 13 and 38 each coordinate substrate. Pyridoxal 5'-phosphate contacts are provided by residues Tyr-67, 102-103 (SK), Tyr-127, Asn-177, Tyr-208, and 236-238 (SLS). The substrate site is built by Lys-103, Tyr-127, and Asn-177. The residue at position 239 (Lys-239) is an N6-(pyridoxal phosphate)lysine. Arg-247 is a pyridoxal 5'-phosphate binding site. Substrate is bound at residue Arg-365.

Belongs to the class-I pyridoxal-phosphate-dependent aminotransferase family. LL-diaminopimelate aminotransferase subfamily. Homodimer. Pyridoxal 5'-phosphate serves as cofactor.

The catalysed reaction is (2S,6S)-2,6-diaminopimelate + 2-oxoglutarate = (S)-2,3,4,5-tetrahydrodipicolinate + L-glutamate + H2O + H(+). The protein operates within amino-acid biosynthesis; L-lysine biosynthesis via DAP pathway; LL-2,6-diaminopimelate from (S)-tetrahydrodipicolinate (aminotransferase route): step 1/1. Its function is as follows. Involved in the synthesis of meso-diaminopimelate (m-DAP or DL-DAP), required for both lysine and peptidoglycan biosynthesis. Catalyzes the direct conversion of tetrahydrodipicolinate to LL-diaminopimelate. The polypeptide is LL-diaminopimelate aminotransferase 2 (Nostoc sp. (strain PCC 7120 / SAG 25.82 / UTEX 2576)).